A 341-amino-acid chain; its full sequence is Very-long-chain 3-oxoacyl-CoA reductase (341 aa).

The helical transmembrane segment at 15–35 (VVTAFSVIGIVFTILKFTSFA) threads the bilayer. Val-61, Asp-115, Asn-142, Lys-177, Tyr-216, Lys-220, Val-249, and Ser-251 together coordinate NADP(+). Catalysis depends on Tyr-216, which acts as the Proton donor. Lys-220 serves as the catalytic Lowers pKa of active site Tyr.

Belongs to the short-chain dehydrogenases/reductases (SDR) family.

The protein resides in the endoplasmic reticulum membrane. It carries out the reaction a very-long-chain (3R)-3-hydroxyacyl-CoA + NADP(+) = a very-long-chain 3-oxoacyl-CoA + NADPH + H(+). Its pathway is lipid metabolism; fatty acid biosynthesis. Its function is as follows. Component of the microsomal membrane bound fatty acid elongation system, which produces the 26-carbon very long-chain fatty acids (VLCFA) from palmitate. Catalyzes the reduction of the 3-ketoacyl-CoA intermediate that is formed in each cycle of fatty acid elongation. VLCFAs serve as precursors for ceramide and sphingolipids. This is Very-long-chain 3-oxoacyl-CoA reductase from Schizosaccharomyces pombe (strain 972 / ATCC 24843) (Fission yeast).